The following is a 316-amino-acid chain: MAAPEAPPLDRVFRTTWLSTECDSHPLPPSYRKFLFETQAADLAGGTTVAAGNLLNESEKDCGQDRRAPGVQPCRLVTMTSVVKTVYSLQPPSALSGGQPADTQTRATSKSLLPVRSKEVDVSKQLHSGGPENDVTKITKLRRENGQMKATDTATRRNVRKGYKPLSKQKSEEELKDKNQLLEAVNKQLHQKLTETQGELKDLTQKVELLEKFRDNCLAILESKGLDPALGSETLASRQESTTDHMDSMLLLETLQEELKLFNETAKKQMEELQALKVKLEMKEERVRFLEQQTLCNNQVNDLTTALKEMEQLLEM.

A Phosphoserine modification is found at Ser-128. Residues 159-316 (VRKGYKPLSK…LKEMEQLLEM (158 aa)) form an interaction with SPAG5 region. Coiled coils occupy residues 166 to 216 (LSKQ…FRDN) and 248 to 316 (SMLL…LLEM).

In terms of assembly, part of an astrin (SPAG5)-kinastrin (SKAP) complex containing KNSTRN, SPAG5, PLK1, DYNLL1 and SGO2. Interacts with SPAG5. Directly binds to microtubules, although at relatively low affinity. Interacts with CENPE; this interaction greatly favors microtubule-binding. Interacts with DSN1/MIS13; leading to localization to kinetochores. Interacts with MAPRE1/EB1; leading to localization to the microtubule plus ends. Interacts with PRPF19. Interacts with DYNLL1. Interacts with MAP4. Widely expressed, including in skin.

The protein resides in the nucleus. It is found in the chromosome. The protein localises to the centromere. Its subcellular location is the kinetochore. It localises to the cytoplasm. The protein resides in the cytoskeleton. It is found in the spindle pole. The protein localises to the microtubule organizing center. Essential component of the mitotic spindle required for faithful chromosome segregation and progression into anaphase. Promotes the metaphase-to-anaphase transition and is required for chromosome alignment, normal timing of sister chromatid segregation, and maintenance of spindle pole architecture. The astrin (SPAG5)-kinastrin (SKAP) complex promotes stable microtubule-kinetochore attachments. Required for kinetochore oscillations and dynamics of microtubule plus-ends during live cell mitosis, possibly by forming a link between spindle microtubule plus-ends and mitotic chromosomes to achieve faithful cell division. May be involved in UV-induced apoptosis via its interaction with PRPF19; however, these results need additional evidences. In Homo sapiens (Human), this protein is Small kinetochore-associated protein.